We begin with the raw amino-acid sequence, 259 residues long: Pimeloyl-[acyl-carrier protein] methyl ester esterase (259 aa).

The region spanning 16–241 (FVMLHGWGMN…QSAHVPFISH (226 aa)) is the AB hydrolase-1 domain. Substrate-binding positions include tryptophan 22, 82–83 (SM), and 143–147 (FLLLQ). Catalysis depends on serine 82, which acts as the Nucleophile. Active-site residues include aspartate 207 and histidine 235. Histidine 235 contacts substrate.

This sequence belongs to the AB hydrolase superfamily. Carboxylesterase BioH family. Monomer.

It localises to the cytoplasm. The catalysed reaction is 6-carboxyhexanoyl-[ACP] methyl ester + H2O = 6-carboxyhexanoyl-[ACP] + methanol + H(+). It functions in the pathway cofactor biosynthesis; biotin biosynthesis. The physiological role of BioH is to remove the methyl group introduced by BioC when the pimeloyl moiety is complete. It allows to synthesize pimeloyl-ACP via the fatty acid synthetic pathway through the hydrolysis of the ester bonds of pimeloyl-ACP esters. The sequence is that of Pimeloyl-[acyl-carrier protein] methyl ester esterase from Hamiltonella defensa subsp. Acyrthosiphon pisum (strain 5AT).